Consider the following 89-residue polypeptide: Small ribosomal subunit protein uS15 (89 aa).

Belongs to the universal ribosomal protein uS15 family. As to quaternary structure, part of the 30S ribosomal subunit. Forms a bridge to the 50S subunit in the 70S ribosome, contacting the 23S rRNA.

One of the primary rRNA binding proteins, it binds directly to 16S rRNA where it helps nucleate assembly of the platform of the 30S subunit by binding and bridging several RNA helices of the 16S rRNA. In terms of biological role, forms an intersubunit bridge (bridge B4) with the 23S rRNA of the 50S subunit in the ribosome. The protein is Small ribosomal subunit protein uS15 of Saccharophagus degradans (strain 2-40 / ATCC 43961 / DSM 17024).